A 299-amino-acid chain; its full sequence is Protein FAM228A (299 aa).

The interval 135–201 (AKGTSYQHGR…GRNRYKGASS (67 aa)) is disordered. The span at 146-159 (KTHDTQKEAKETEK) shows a compositional bias: basic and acidic residues. At S264 the chain carries Phosphoserine.

It belongs to the FAM228 family.

In Mus musculus (Mouse), this protein is Protein FAM228A (Fam228a).